The primary structure comprises 173 residues: ATP-dependent protease subunit HslV (173 aa).

Thr-2 is a catalytic residue. The Na(+) site is built by Gly-157, Cys-160, and Thr-163.

The protein belongs to the peptidase T1B family. HslV subfamily. In terms of assembly, a double ring-shaped homohexamer of HslV is capped on each side by a ring-shaped HslU homohexamer. The assembly of the HslU/HslV complex is dependent on binding of ATP.

The protein resides in the cytoplasm. It catalyses the reaction ATP-dependent cleavage of peptide bonds with broad specificity.. Allosterically activated by HslU binding. Protease subunit of a proteasome-like degradation complex believed to be a general protein degrading machinery. In Nitrosomonas eutropha (strain DSM 101675 / C91 / Nm57), this protein is ATP-dependent protease subunit HslV.